The sequence spans 274 residues: tRNA-cytidine(32) 2-sulfurtransferase (274 aa).

Positions 40–45 match the PP-loop motif motif; it reads SGGKDS. The [4Fe-4S] cluster site is built by cysteine 115, cysteine 118, and cysteine 206.

Belongs to the TtcA family. As to quaternary structure, homodimer. Mg(2+) is required as a cofactor. It depends on [4Fe-4S] cluster as a cofactor.

It is found in the cytoplasm. It carries out the reaction cytidine(32) in tRNA + S-sulfanyl-L-cysteinyl-[cysteine desulfurase] + AH2 + ATP = 2-thiocytidine(32) in tRNA + L-cysteinyl-[cysteine desulfurase] + A + AMP + diphosphate + H(+). The protein operates within tRNA modification. Functionally, catalyzes the ATP-dependent 2-thiolation of cytidine in position 32 of tRNA, to form 2-thiocytidine (s(2)C32). The sulfur atoms are provided by the cysteine/cysteine desulfurase (IscS) system. This is tRNA-cytidine(32) 2-sulfurtransferase from Pseudomonas fluorescens (strain ATCC BAA-477 / NRRL B-23932 / Pf-5).